A 276-amino-acid chain; its full sequence is Large ribosomal subunit protein uL2 (276 aa).

The segment at 218–255 (PTVRGSAMNPCDHPHGGGEGRTPIGMSSPVTPWGKPAL) is disordered.

Belongs to the universal ribosomal protein uL2 family. As to quaternary structure, part of the 50S ribosomal subunit. Forms a bridge to the 30S subunit in the 70S ribosome.

Its function is as follows. One of the primary rRNA binding proteins. Required for association of the 30S and 50S subunits to form the 70S ribosome, for tRNA binding and peptide bond formation. It has been suggested to have peptidyltransferase activity; this is somewhat controversial. Makes several contacts with the 16S rRNA in the 70S ribosome. The protein is Large ribosomal subunit protein uL2 of Clostridium tetani (strain Massachusetts / E88).